The following is a 148-amino-acid chain: Probable calcium-binding protein CML14 (148 aa).

EF-hand domains lie at 9–44 (DQVS…LGGN), 80–115 (PFDR…IGEK), and 116–148 (LQPS…MVAK). Positions 22, 24, 26, 28, and 33 each coordinate Ca(2+).

Functionally, potential calcium sensor. The protein is Probable calcium-binding protein CML14 (CML14) of Arabidopsis thaliana (Mouse-ear cress).